An 807-amino-acid polypeptide reads, in one-letter code: Glycerol-3-phosphate acyltransferase (807 aa).

The HXXXXD motif signature appears at 306-311 (HRSHMD).

This sequence belongs to the GPAT/DAPAT family.

It localises to the cell inner membrane. The catalysed reaction is sn-glycerol 3-phosphate + an acyl-CoA = a 1-acyl-sn-glycero-3-phosphate + CoA. Its pathway is phospholipid metabolism; CDP-diacylglycerol biosynthesis; CDP-diacylglycerol from sn-glycerol 3-phosphate: step 1/3. This Escherichia coli O157:H7 protein is Glycerol-3-phosphate acyltransferase (plsB).